The chain runs to 267 residues: WUSCHEL-related homeobox 8 (267 aa).

The homeobox; WUS-type DNA-binding region spans 88–152; it reads TARQRWTPTP…NRRARSKRKQ (65 aa). Positions 148-195 are disordered; it reads SKRKQAALPNNNAESEAEADEESPTDKKPKSDRPLHQNIAMRDHNSER. The segment covering 171–195 has biased composition (basic and acidic residues); sequence PTDKKPKSDRPLHQNIAMRDHNSER.

Belongs to the WUS homeobox family.

The protein resides in the nucleus. Its function is as follows. Transcription factor which may be involved in developmental processes. The sequence is that of WUSCHEL-related homeobox 8 (WOX8) from Oryza sativa subsp. japonica (Rice).